A 282-amino-acid chain; its full sequence is Energy-coupling factor transporter ATP-binding protein EcfA1 (282 aa).

One can recognise an ABC transporter domain in the interval 6-243 (ISFDHVTFTY…VEMLKRIGLD (238 aa)). 40 to 47 (GHNGSGKS) serves as a coordination point for ATP.

This sequence belongs to the ABC transporter superfamily. Energy-coupling factor EcfA family. As to quaternary structure, forms a stable energy-coupling factor (ECF) transporter complex composed of 2 membrane-embedded substrate-binding proteins (S component), 2 ATP-binding proteins (A component) and 2 transmembrane proteins (T component).

The protein resides in the cell membrane. Functionally, ATP-binding (A) component of a common energy-coupling factor (ECF) ABC-transporter complex. Unlike classic ABC transporters this ECF transporter provides the energy necessary to transport a number of different substrates. The protein is Energy-coupling factor transporter ATP-binding protein EcfA1 of Lactobacillus delbrueckii subsp. bulgaricus (strain ATCC 11842 / DSM 20081 / BCRC 10696 / JCM 1002 / NBRC 13953 / NCIMB 11778 / NCTC 12712 / WDCM 00102 / Lb 14).